Reading from the N-terminus, the 286-residue chain is Alpha-ketoglutarate-dependent dioxygenase alkB homolog 3 (286 aa).

A disordered region spans residues Gln-21 to Lys-45. A compositionally biased stretch (polar residues) spans Ala-22–Lys-31. Residues Trp-115 and Tyr-141–Tyr-143 each bind substrate. In terms of domain architecture, Fe2OG dioxygenase spans Thr-172–Tyr-278. Position 177 is a (4R)-5-hydroxyleucine; alternate (Leu-177). Residue Leu-177 is modified to (4R)-5-oxoleucine; alternate. Residue Asn-179 to Tyr-181 coordinates 2-oxoglutarate. Fe cation-binding residues include His-191 and Asp-193. Asp-194 lines the substrate pocket. His-257 lines the Fe cation pocket. 2-oxoglutarate is bound by residues Arg-269–Arg-275 and Arg-275.

The protein belongs to the alkB family. Interacts with the ASCC complex composed of ASCC1, ASCC2 and ASCC3. Interacts directly with ASCC3, and is thereby recruited to the ASCC complex. Interacts with OTUD4; the interaction is direct. Interacts with USP7 and USP9X. Fe(2+) is required as a cofactor. Ubiquitinated; undergoes 'Lys-48'-linked polyubiquitination. OTUD4 promotes USP7 and USP9X-dependent deubiquitination of 'Lys-48'-polyubiquitinated ALKBH3 promoting the repair of alkylated DNA lesions. In terms of tissue distribution, ubiquitous. Detected in heart, pancreas, skeletal muscle, thymus, testis, ovary, spleen, prostate, small intestine, peripheral blood leukocytes, urinary bladder and colon.

It localises to the nucleus. It is found in the cytoplasm. It catalyses the reaction an N(1)-methyladenosine in mRNA + 2-oxoglutarate + O2 = an adenosine in mRNA + formaldehyde + succinate + CO2. The enzyme catalyses a methylated nucleobase within DNA + 2-oxoglutarate + O2 = a nucleobase within DNA + formaldehyde + succinate + CO2. It carries out the reaction an N(1)-methyl-2'-deoxyadenosine in single-stranded DNA + 2-oxoglutarate + O2 = a 2'-deoxyadenosine in single-stranded DNA + formaldehyde + succinate + CO2 + H(+). The catalysed reaction is an N(3)-methyl-2'-deoxycytidine in single-stranded DNA + 2-oxoglutarate + O2 = a 2'-deoxycytidine in single-stranded DNA + formaldehyde + succinate + CO2 + H(+). It catalyses the reaction a 3,N(4)-etheno-2'-deoxycytidine in single-stranded DNA + 2-oxoglutarate + O2 + H2O = a 2'-deoxycytidine in single-stranded DNA + glyoxal + succinate + CO2. Activated by ascorbate. Functionally, dioxygenase that mediates demethylation of DNA and RNA containing 1-methyladenosine (m1A). Repairs alkylated DNA containing 1-methyladenosine (m1A) and 3-methylcytosine (m3C) by oxidative demethylation. Has a strong preference for single-stranded DNA. Able to process alkylated m3C within double-stranded regions via its interaction with ASCC3, which promotes DNA unwinding to generate single-stranded substrate needed for ALKBH3. Can repair exocyclic 3,N4-ethenocytosine adducs in single-stranded DNA. Also acts on RNA. Demethylates N(1)-methyladenosine (m1A) RNA, an epigenetic internal modification of messenger RNAs (mRNAs) highly enriched within 5'-untranslated regions (UTRs) and in the vicinity of start codons. Requires molecular oxygen, alpha-ketoglutarate and iron. The sequence is that of Alpha-ketoglutarate-dependent dioxygenase alkB homolog 3 from Homo sapiens (Human).